Here is a 445-residue protein sequence, read N- to C-terminus: Proton extrusion protein PxcA (445 aa).

4 helical membrane passes run 227 to 247 (FILL…TFLI), 322 to 342 (AIAN…VVAF), 369 to 389 (LIIL…WEVI), and 405 to 425 (FNFL…KYWI).

It belongs to the CemA family.

The protein resides in the cell inner membrane. Its function is as follows. Required for H(+) efflux immediately after light irradiation to form a rapid H(+) concentration gradient across the thylakoid membranes. Together with PxcL, contributes to transient H(+) uptake following dark to light transition. The sequence is that of Proton extrusion protein PxcA from Microcystis aeruginosa (strain NIES-843 / IAM M-2473).